We begin with the raw amino-acid sequence, 1176 residues long: Histidine kinase 2 (1176 aa).

At M1–P29 the chain is on the cytoplasmic side. A helical membrane pass occupies residues L30–G50. The Extracellular segment spans residues R51–R174. A helical membrane pass occupies residues N175–S195. Residues K196–K232 are Cytoplasmic-facing. A helical transmembrane segment spans residues N233–T253. Residues N254 to P536 are Extracellular-facing. The 225-residue stretch at I302 to H526 folds into the CHASE domain. A helical transmembrane segment spans residues W537–L557. At Y558 to C1176 the chain is on the cytoplasmic side. The Histidine kinase domain maps to T594 to K867. Position 597 is a phosphohistidine; by autocatalysis (H597). Response regulatory domains follow at residues R891–L1013 and Q1036–F1173. 2 positions are modified to 4-aspartylphosphate: D942 and D1086.

As to quaternary structure, self-interacts. Interacts with AHK3, AHP1, AHP2, AHP3, AHP5, ATAF2, AT2S3, BETAA-AD, CYP20-2, DRP1A, HIR1, HIR2, PI4KB1, PI4KG5 and At4g12060. Autophosphorylated predominantly on His residues. Activation probably requires a transfer of a phosphate group between a His in the transmitter domain and an Asp of the receiver domain. As to expression, expressed in roots, leaves and flowers, mostly in the vascular tissues. Present in seedlings.

Its subcellular location is the endoplasmic reticulum membrane. The catalysed reaction is ATP + protein L-histidine = ADP + protein N-phospho-L-histidine.. Activated by cytokinins to initiate phosphorelay signaling. Its function is as follows. Cytokinins (CK) receptor related to bacterial two-component regulators. Functions as a histidine kinase and transmits the stress signal to a downstream MAPK cascade. This protein undergoes an ATP-dependent autophosphorylation at a conserved histidine residue in the kinase core, and a phosphoryl group is then transferred to a conserved aspartate residue in the receiver domain. In the presence of cytokinin, feeds phosphate to phosphorelay-integrating histidine phosphotransfer protein (HPt) and activates subsequent cascade. Involved in meristems establishment in seedlings. Redundant negative regulator of drought and salt stress responses and abscisic acid (ABA) signaling. Together with AHK3, plays a negative regulatory role in cold stress signaling via inhibition of ABA response, occurring independently of the cold acclimation pathway. Redundant positive regulator of cytokinin signaling that regulates many developmental processes including seed germination, cell division, seed size, chlorophyll retention during leaf senescence, root repression and shoot promotion. Involved in alkamides (e.g. N-isobutyl decanamide) and N-acylethanolamides (NAE) signaling that control meristematic activity and differentiation processes during plant development. Contributes to vascular bundle formation and secondary growth in a cytokinin-dependent manner, probably by promoting the maintenance of mitotic activity and/or identity of procambial cells. Together with AHK4, required for growth and reproduction promotion stimulated by the endophytic fungus Piriformospora indica in a trans-zeatin-dependent manner. Required by the cytokinin-dependent flower development regulation pathway. The chain is Histidine kinase 2 (AHK2) from Arabidopsis thaliana (Mouse-ear cress).